The primary structure comprises 354 residues: Trans-3-hydroxy-L-proline dehydratase (354 aa).

Cys-104 acts as the Proton acceptor in catalysis. Substrate contacts are provided by residues 105 to 106, Asp-269, and 274 to 275; these read GH and GS.

It belongs to the proline racemase family. Homodimer. Ubiquitously expressed.

The enzyme catalyses trans-3-hydroxy-L-proline = 1-pyrroline-2-carboxylate + H2O. Functionally, catalyzes the dehydration of trans-3-hydroxy-L-proline to Delta(1)-pyrroline-2-carboxylate (Pyr2C). May be required to degrade trans-3-hydroxy-L-proline from the diet and originating from the degradation of proteins such as collagen-IV that contain it. The chain is Trans-3-hydroxy-L-proline dehydratase (L3HYPDH) from Homo sapiens (Human).